A 95-amino-acid chain; its full sequence is Immunogenic miracidial antigen 8C (95 aa).

A compositionally biased stretch (polar residues) spans 1-15 (EFTISFSSPVISTGQ). The segment at 1–95 (EFTISFSSPV…PKKYGSGHKY (95 aa)) is disordered. The segment covering 20–41 (GDEDYHDGDDDVDYTDDVDDVD) has biased composition (acidic residues). The span at 45–59 (GSPSQLLQGGYQRNQ) shows a compositional bias: polar residues.

Belongs to the immunogenic miracidial antigen family.

The chain is Immunogenic miracidial antigen 8C (8C) from Schistosoma japonicum (Blood fluke).